Reading from the N-terminus, the 255-residue chain is Probable esterase ATEG_07663 (255 aa).

Catalysis depends on charge relay system residues serine 122, aspartate 200, and histidine 227.

The protein belongs to the LovG family.

Functionally, probable esterase; part of the cluster B that mediates the biosynthesis of azasperpyranones, members of the azaphilone family that exhibit anti-cancer activities. Azasperpyranones are synthesized by 2 clusters, A and B. Cluster A is responsible for the production of the polyhydric phenol moiety while the azaphilonoid scaffold is produced by the cluster B. The non-reducing polyketide synthase ATEG_03629 produces 5-methyl orsellinic acid, which is then reduced to 5-methyl orsellinic aldehyde by the NRPS-like protein ATEG_03630. 5-methyl orsellinic aldehyde is then first hydroxylated by the FAD-dependent monooxygenase ATEG_03635 and subsequently hydroxylated by the cytochrome P450 monooxygenase ATEG_03631 to produce the unstable polyhydric phenol precursor of azasperpyranones. On the other hand, the polyketide synthase ATEG_07659 is responsible for producing the 3,5-dimethyloctadienone moiety from acetyl-CoA, three malonyl-CoA, and two S-adenosyl methionines (SAM). The 3,5-dimethyloctadienone moiety is then loaded onto the SAT domain of ATEG_07661 and extended with four malonyl-CoA and one SAM, which leads to the formation of 2,4-dihydroxy-6-(5,7-dimethyl-2-oxo-trans-3-trans-5-nonadienyl)-3-methylbenzaldehyde (compound 8) after reductive release and aldol condensation. The FAD-dependent monooxygenase ATEG_07662 is the next enzyme in the biosynthesis sequence and hydroxylates the side chain at the benzylic position of compound 8. In Aspergillus nidulans, afoF, the ortholog of the FAD-dependent oxygenase ATEG_07660, is the key enzyme for the biosynthesis of asperfuranone by catalyzing the hydroxylation at C-8 of to prevent the formation of a six-membered ring hemiacetal intermediate and thus facilitating the formation of a five-membered ring to produce asperfuranone. In Aspergillus terreus, ATEG_07660 is probably not functional, which leads to the formation of the six-membered ring hemiacetal intermediate presperpyranone instead of asperfuranone. Finally, ATEG_03636 is involved in the condensation of the polyhydric phenol moiety produced by cluster A and the perasperpyranone precursor produced by cluster B, to yield azasperpyranone A. Further modifications of azasperpyranone A result in the production of derivatives, including azasperpyranone B to F. In Aspergillus terreus (strain NIH 2624 / FGSC A1156), this protein is Probable esterase ATEG_07663.